The sequence spans 624 residues: tRNA uridine 5-carboxymethylaminomethyl modification enzyme MnmG (624 aa).

14–19 (GAGHAG) is an FAD binding site. 273–287 (GTRYCPSFEDKVVRF) serves as a coordination point for NAD(+).

The protein belongs to the MnmG family. Homodimer. Heterotetramer of two MnmE and two MnmG subunits. FAD is required as a cofactor.

The protein localises to the cytoplasm. In terms of biological role, NAD-binding protein involved in the addition of a carboxymethylaminomethyl (cmnm) group at the wobble position (U34) of certain tRNAs, forming tRNA-cmnm(5)s(2)U34. In Syntrophomonas wolfei subsp. wolfei (strain DSM 2245B / Goettingen), this protein is tRNA uridine 5-carboxymethylaminomethyl modification enzyme MnmG.